The chain runs to 326 residues: Probable cell division protein WhiA (326 aa).

The H-T-H motif DNA-binding region spans 275–308; the sequence is SLDELGHHADPPMTKDAVAGRIRRLLAMADKKAV.

It belongs to the WhiA family.

Its function is as follows. Involved in cell division and chromosome segregation. The sequence is that of Probable cell division protein WhiA from Clavibacter michiganensis subsp. michiganensis (strain NCPPB 382).